The chain runs to 603 residues: UvrABC system protein C (603 aa).

The GIY-YIG domain maps to 13–92 (NGPGVYLMKD…IRKHKPRYNI (80 aa)). The region spanning 202–237 (NDLLQKIKEQMAAASERQEYELAARLRDRMFAIQAT) is the UVR domain.

It belongs to the UvrC family. As to quaternary structure, interacts with UvrB in an incision complex.

The protein resides in the cytoplasm. Its function is as follows. The UvrABC repair system catalyzes the recognition and processing of DNA lesions. UvrC both incises the 5' and 3' sides of the lesion. The N-terminal half is responsible for the 3' incision and the C-terminal half is responsible for the 5' incision. In Desulfatibacillum aliphaticivorans, this protein is UvrABC system protein C.